A 117-amino-acid chain; its full sequence is Immunoglobulin kappa variable 1-16 (117 aa).

The N-terminal stretch at 1–22 (MDMRVLAQLLGLLLLCFPGARC) is a signal peptide. A framework-1 region spans residues 23 to 45 (DIQMTQSPSSLSASVGDRVTITC). The Ig-like domain occupies 24-117 (IQMTQSPSSL…YYCQQYNSYP (94 aa)). A disulfide bond links Cys-45 and Cys-110. The complementarity-determining-1 stretch occupies residues 46–56 (RASQGISNYLA). Positions 57–71 (WFQQKPGKAPKSLIY) are framework-2. Residues 72 to 78 (AASSLQS) form a complementarity-determining-2 region. The interval 79 to 110 (GVPSKFSGSGSGTDFTLTISSLQPEDFATYYC) is framework-3. A complementarity-determining-3 region spans residues 111-117 (QQYNSYP).

Immunoglobulins are composed of two identical heavy chains and two identical light chains; disulfide-linked.

It localises to the secreted. Its subcellular location is the cell membrane. In terms of biological role, v region of the variable domain of immunoglobulin light chains that participates in the antigen recognition. Immunoglobulins, also known as antibodies, are membrane-bound or secreted glycoproteins produced by B lymphocytes. In the recognition phase of humoral immunity, the membrane-bound immunoglobulins serve as receptors which, upon binding of a specific antigen, trigger the clonal expansion and differentiation of B lymphocytes into immunoglobulins-secreting plasma cells. Secreted immunoglobulins mediate the effector phase of humoral immunity, which results in the elimination of bound antigens. The antigen binding site is formed by the variable domain of one heavy chain, together with that of its associated light chain. Thus, each immunoglobulin has two antigen binding sites with remarkable affinity for a particular antigen. The variable domains are assembled by a process called V-(D)-J rearrangement and can then be subjected to somatic hypermutations which, after exposure to antigen and selection, allow affinity maturation for a particular antigen. The polypeptide is Immunoglobulin kappa variable 1-16 (Homo sapiens (Human)).